Here is a 544-residue protein sequence, read N- to C-terminus: Chaperonin GroEL (544 aa).

ATP is bound by residues Thr-30–Pro-33, Lys-51, Asp-87–Thr-91, Gly-415, Asn-479–Ala-481, and Asp-495.

The protein belongs to the chaperonin (HSP60) family. In terms of assembly, forms a cylinder of 14 subunits composed of two heptameric rings stacked back-to-back. Interacts with the co-chaperonin GroES.

The protein resides in the cytoplasm. The catalysed reaction is ATP + H2O + a folded polypeptide = ADP + phosphate + an unfolded polypeptide.. In terms of biological role, together with its co-chaperonin GroES, plays an essential role in assisting protein folding. The GroEL-GroES system forms a nano-cage that allows encapsulation of the non-native substrate proteins and provides a physical environment optimized to promote and accelerate protein folding. This chain is Chaperonin GroEL, found in Francisella tularensis subsp. mediasiatica (strain FSC147).